A 100-amino-acid chain; its full sequence is Urease subunit gamma (100 aa).

This sequence belongs to the urease gamma subunit family. In terms of assembly, heterotrimer of UreA (gamma), UreB (beta) and UreC (alpha) subunits. Three heterotrimers associate to form the active enzyme.

It is found in the cytoplasm. The catalysed reaction is urea + 2 H2O + H(+) = hydrogencarbonate + 2 NH4(+). It participates in nitrogen metabolism; urea degradation; CO(2) and NH(3) from urea (urease route): step 1/1. The protein is Urease subunit gamma of Ralstonia nicotianae (strain ATCC BAA-1114 / GMI1000) (Ralstonia solanacearum).